The following is an 85-amino-acid chain: UPF0181 protein YE1782 (85 aa).

2 disordered regions span residues 1 to 22 and 57 to 85; these read MLAG…RIHQ and DTDF…PYEG. The span at 9–21 shows a compositional bias: basic and acidic residues; that stretch reads SHEEQQEAVERIH. Acidic residues predominate over residues 74–85; sequence QDADEIEDPYEG.

It belongs to the UPF0181 family.

This is UPF0181 protein YE1782 from Yersinia enterocolitica serotype O:8 / biotype 1B (strain NCTC 13174 / 8081).